The primary structure comprises 210 residues: Glutathione S-transferase P (210 aa).

Positions 2 to 81 constitute a GST N-terminal domain; sequence ASYTIVYFPV…HLGRTLGLYG (80 aa). A Phosphotyrosine; by EGFR modification is found at Tyr4. Glutathione contacts are provided by residues Tyr8, Arg14, Trp39, Lys45, and 52–53; that span reads QL. Thr62 carries the post-translational modification Phosphothreonine. 65 to 66 contributes to the glutathione binding site; that stretch reads QS. Positions 83–204 constitute a GST C-terminal domain; that stretch reads DQREAALVDM…ASPEHVNRPI (122 aa). 2 positions are modified to N6-succinyllysine: Lys103 and Lys116. At Lys128 the chain carries N6-acetyllysine.

Belongs to the GST superfamily. Pi family. As to quaternary structure, homodimer. Interacts with CDK5.

It is found in the cytoplasm. Its subcellular location is the mitochondrion. The protein localises to the nucleus. The catalysed reaction is RX + glutathione = an S-substituted glutathione + a halide anion + H(+). It catalyses the reaction prostaglandin J2 + glutathione = prostaglandin J2-S-(R)-glutathione. It carries out the reaction prostaglandin J2 + glutathione = prostaglandin J2-S-(S)-glutathione. The enzyme catalyses prostaglandin A2 + glutathione = prostaglandin A2-S-(S)-glutathione. The catalysed reaction is 11(S)-hydroxy-14(S),15(S)-epoxy-(5Z,8Z,12E)-eicosatrienoate + glutathione = (11S,15S)-dihydroxy-14(R)-S-glutathionyl-(5Z,8Z,12E)-eicosatrienoate. Conjugation of reduced glutathione to a wide number of exogenous and endogenous hydrophobic electrophiles. Involved in the formation of glutathione conjugates of both prostaglandin A2 (PGA2) and prostaglandin J2 (PGJ2). Participates in the formation of novel hepoxilin regioisomers. Negatively regulates CDK5 activity via p25/p35 translocation to prevent neurodegeneration. This chain is Glutathione S-transferase P (GSTP1), found in Capra hircus (Goat).